Here is a 119-residue protein sequence, read N- to C-terminus: NADH-quinone oxidoreductase subunit A (119 aa).

3 helical membrane passes run 7 to 27 (YPVLLFLLVGTGLGIALVSIG), 63 to 83 (LVAILFIIFDLETAFLFPWGV), and 88 to 108 (IGWPGFIAMMIFLLEFLLGFA).

It belongs to the complex I subunit 3 family. As to quaternary structure, NDH-1 is composed of 14 different subunits. Subunits NuoA, H, J, K, L, M, N constitute the membrane sector of the complex.

It is found in the cell inner membrane. The enzyme catalyses a quinone + NADH + 5 H(+)(in) = a quinol + NAD(+) + 4 H(+)(out). NDH-1 shuttles electrons from NADH, via FMN and iron-sulfur (Fe-S) centers, to quinones in the respiratory chain. The immediate electron acceptor for the enzyme in this species is believed to be ubiquinone. Couples the redox reaction to proton translocation (for every two electrons transferred, four hydrogen ions are translocated across the cytoplasmic membrane), and thus conserves the redox energy in a proton gradient. The polypeptide is NADH-quinone oxidoreductase subunit A (Burkholderia mallei (strain NCTC 10247)).